The sequence spans 517 residues: 2-isopropylmalate synthase (517 aa).

Residues 5–268 (IIIFDTTLRD…DTRINTQEIH (264 aa)) enclose the Pyruvate carboxyltransferase domain. D14, H202, H204, and N238 together coordinate Mn(2+). The interval 393-517 (SLDVITSQTI…ADLKSHKISQ (125 aa)) is regulatory domain.

It belongs to the alpha-IPM synthase/homocitrate synthase family. LeuA type 1 subfamily. As to quaternary structure, homodimer. It depends on Mn(2+) as a cofactor.

It localises to the cytoplasm. It catalyses the reaction 3-methyl-2-oxobutanoate + acetyl-CoA + H2O = (2S)-2-isopropylmalate + CoA + H(+). It functions in the pathway amino-acid biosynthesis; L-leucine biosynthesis; L-leucine from 3-methyl-2-oxobutanoate: step 1/4. Catalyzes the condensation of the acetyl group of acetyl-CoA with 3-methyl-2-oxobutanoate (2-ketoisovalerate) to form 3-carboxy-3-hydroxy-4-methylpentanoate (2-isopropylmalate). The polypeptide is 2-isopropylmalate synthase (Histophilus somni (strain 2336) (Haemophilus somnus)).